Here is a 335-residue protein sequence, read N- to C-terminus: Biotin synthase (335 aa).

The region spanning Asn51–Arg278 is the Radical SAM core domain. [4Fe-4S] cluster contacts are provided by Cys66, Cys70, and Cys73. Residues Cys110, Cys141, Cys201, and Arg273 each contribute to the [2Fe-2S] cluster site.

It belongs to the radical SAM superfamily. Biotin synthase family. In terms of assembly, homodimer. [4Fe-4S] cluster serves as cofactor. [2Fe-2S] cluster is required as a cofactor.

It carries out the reaction (4R,5S)-dethiobiotin + (sulfur carrier)-SH + 2 reduced [2Fe-2S]-[ferredoxin] + 2 S-adenosyl-L-methionine = (sulfur carrier)-H + biotin + 2 5'-deoxyadenosine + 2 L-methionine + 2 oxidized [2Fe-2S]-[ferredoxin]. It functions in the pathway cofactor biosynthesis; biotin biosynthesis; biotin from 7,8-diaminononanoate: step 2/2. Catalyzes the conversion of dethiobiotin (DTB) to biotin by the insertion of a sulfur atom into dethiobiotin via a radical-based mechanism. The protein is Biotin synthase of Bordetella bronchiseptica (strain ATCC BAA-588 / NCTC 13252 / RB50) (Alcaligenes bronchisepticus).